The primary structure comprises 246 residues: Alpha-amylase inhibitor 1 (246 aa).

An N-terminal signal peptide occupies residues 1–23; the sequence is MIMASSKLLSLALFLALLSHANS. 3 N-linked (GlcNAc...) asparagine glycosylation sites follow: asparagine 35, asparagine 88, and asparagine 163. The propeptide occupies 240–246; sequence IVLNKIL.

Belongs to the leguminous lectin family. In terms of assembly, heterodimer of chain 1 and chain 2. Post-translationally, proteolytic processing yields active form.

Its function is as follows. Lectin and alpha-amylase inhibitor. Acts as a defensive protein against insects. In Phaseolus vulgaris (Kidney bean), this protein is Alpha-amylase inhibitor 1 (LLP).